Here is a 430-residue protein sequence, read N- to C-terminus: Serine--tRNA ligase (430 aa).

237 to 239 (TAE) lines the L-serine pocket. An ATP-binding site is contributed by 268–270 (RSE). An L-serine-binding site is contributed by glutamate 291. 355 to 358 (EISS) is an ATP binding site. Residue serine 391 coordinates L-serine.

This sequence belongs to the class-II aminoacyl-tRNA synthetase family. Type-1 seryl-tRNA synthetase subfamily. Homodimer. The tRNA molecule binds across the dimer.

The protein resides in the cytoplasm. The enzyme catalyses tRNA(Ser) + L-serine + ATP = L-seryl-tRNA(Ser) + AMP + diphosphate + H(+). The catalysed reaction is tRNA(Sec) + L-serine + ATP = L-seryl-tRNA(Sec) + AMP + diphosphate + H(+). It participates in aminoacyl-tRNA biosynthesis; selenocysteinyl-tRNA(Sec) biosynthesis; L-seryl-tRNA(Sec) from L-serine and tRNA(Sec): step 1/1. Functionally, catalyzes the attachment of serine to tRNA(Ser). Is also able to aminoacylate tRNA(Sec) with serine, to form the misacylated tRNA L-seryl-tRNA(Sec), which will be further converted into selenocysteinyl-tRNA(Sec). This Salmonella enteritidis PT4 (strain P125109) protein is Serine--tRNA ligase.